We begin with the raw amino-acid sequence, 712 residues long: DNA topoisomerase 3 (712 aa).

Positions 2–135 (KSLIIAEKPS…TKRLWISSVT (134 aa)) constitute a Toprim domain. Mg(2+) contacts are provided by glutamate 8 and aspartate 104. The Topo IA-type catalytic domain occupies 152-581 (FNNLYHAALA…EMKAFTNQVV (430 aa)). The segment at 186–191 (SLGRVQ) is interaction with DNA. Catalysis depends on tyrosine 305, which acts as the O-(5'-phospho-DNA)-tyrosine intermediate.

It belongs to the type IA topoisomerase family. Mg(2+) serves as cofactor.

The enzyme catalyses ATP-independent breakage of single-stranded DNA, followed by passage and rejoining.. Functionally, releases the supercoiling and torsional tension of DNA, which is introduced during the DNA replication and transcription, by transiently cleaving and rejoining one strand of the DNA duplex. Introduces a single-strand break via transesterification at a target site in duplex DNA. The scissile phosphodiester is attacked by the catalytic tyrosine of the enzyme, resulting in the formation of a DNA-(5'-phosphotyrosyl)-enzyme intermediate and the expulsion of a 3'-OH DNA strand. The free DNA strand then undergoes passage around the unbroken strand, thus removing DNA supercoils. Finally, in the religation step, the DNA 3'-OH attacks the covalent intermediate to expel the active-site tyrosine and restore the DNA phosphodiester backbone. This Staphylococcus saprophyticus subsp. saprophyticus (strain ATCC 15305 / DSM 20229 / NCIMB 8711 / NCTC 7292 / S-41) protein is DNA topoisomerase 3.